Here is a 101-residue protein sequence, read N- to C-terminus: MYIVYEYAISTNWIWLYVWLFLFLDSGCQILLRIESEQAFLSLPPIVSFALSVATLIFFYSKRISICYHMLHMYRKWSMVHPQILFAIDSKIPSSLYIYHM.

2 helical membrane-spanning segments follow: residues isoleucine 3 to phenylalanine 23 and alanine 39 to phenylalanine 59.

The protein resides in the membrane. This is an uncharacterized protein from Saccharomyces cerevisiae (strain ATCC 204508 / S288c) (Baker's yeast).